A 661-amino-acid chain; its full sequence is Kininogen-1 (661 aa).

The N-terminal stretch at 1-20 is a signal peptide; that stretch reads MKLITTLLLCSGLLLTLTQG. Positions 28–131 constitute a Cystatin kininogen-type 1 domain; sequence CNDEAVFQAV…TQTCKIAPSK (104 aa). 9 disulfides stabilise this stretch: Cys-28/Cys-631, Cys-83/Cys-94, Cys-107/Cys-125, Cys-141/Cys-144, Cys-205/Cys-217, Cys-228/Cys-247, Cys-263/Cys-266, Cys-327/Cys-339, and Cys-350/Cys-369. Residue Asn-82 is glycosylated (N-linked (GlcNAc...) asparagine). Residues 150 to 253 form the Cystatin kininogen-type 2 domain; sequence TDSPDLEPVL…SQSCTLYSGD (104 aa). Residues Asn-168 and Asn-204 are each glycosylated (N-linked (GlcNAc...) asparagine). Asn-242 is a glycosylation site (N-linked (GlcNAc...) asparagine). The 104-residue stretch at 272–375 folds into the Cystatin kininogen-type 3 domain; sequence VDSPELKEVL…TVKCQALDMT (104 aa). Ser-331 bears the Phosphoserine mark. Disordered stretches follow at residues 405–471, 485–583, and 626–661; these read YIAR…LGHG, DGDD…FQDS, and ATSP…DALS. 2 stretches are compositionally biased toward basic residues: residues 434-471 and 492-526; these read KANK…LGHG and TVGH…HGKH. Low complexity predominate over residues 541 to 555; that stretch reads TESLASSSEYSTTST. Over residues 650-661 the composition is skewed to acidic residues; it reads EFSDFDLLDALS.

As to quaternary structure, isoform LMW interacts with CRISP3. Post-translationally, bradykinin is released from kininogen by plasma kallikrein. In terms of processing, phosphorylated by FAM20C in the extracellular medium. Bradykinin is inactivated by ACE, which removes the dipeptide Arg-Phe from its C-terminus. As to expression, plasma.

Its subcellular location is the secreted. The protein resides in the extracellular space. Its function is as follows. Kininogens are inhibitors of thiol proteases. HMW-kininogen plays an important role in blood coagulation by helping to position optimally prekallikrein and factor XI next to factor XII; HMW-kininogen inhibits the thrombin- and plasmin-induced aggregation of thrombocytes. LMW-kininogen inhibits the aggregation of thrombocytes. LMW-kininogen is in contrast to HMW-kininogen not involved in blood clotting. The active peptide bradykinin is a potent vasodilatator that is released from HMW-kininogen shows a variety of physiological effects: (A) influence in smooth muscle contraction, (B) induction of hypotension, (C) natriuresis and diuresis, (D) decrease in blood glucose level, (E) it is a mediator of inflammation and causes (E1) increase in vascular permeability, (E2) stimulation of nociceptors (4E3) release of other mediators of inflammation (e.g. prostaglandins), (F) it has a cardioprotective effect (directly via bradykinin action, indirectly via endothelium-derived relaxing factor action). This chain is Kininogen-1 (Kng1), found in Mus musculus (Mouse).